A 546-amino-acid chain; its full sequence is Casein kinase I homolog 2 (546 aa).

Composition is skewed to polar residues over residues Met1–Arg33 and His44–Asn55. The segment at Met1–Asp67 is disordered. Ser2 carries the N-acetylserine modification. The Protein kinase domain maps to Tyr76–Met360. Residues Ile82–Leu90 and Lys105 each bind ATP. The active-site Proton acceptor is Asp195. 2 disordered regions span residues Asn373–Ala425 and Gln443–Cys546. A compositionally biased stretch (low complexity) spans Gln412 to Ala425. The span at Asp453–Lys465 shows a compositional bias: basic and acidic residues. At Ser455 the chain carries Phosphoserine. Lys465 is covalently cross-linked (Glycyl lysine isopeptide (Lys-Gly) (interchain with G-Cter in ubiquitin)). Residues Gln475–Gln496 show a composition bias toward low complexity. Residues Phe497 to Arg530 are compositionally biased toward polar residues. The span at Asn533–Cys546 shows a compositional bias: low complexity. Residues Cys545 and Cys546 are each lipidated (S-palmitoyl cysteine).

It belongs to the protein kinase superfamily. CK1 Ser/Thr protein kinase family. Casein kinase I subfamily. In terms of processing, palmitoylated by AKR1, which is required for proper plasma membrane localization of YCK2.

It localises to the cell membrane. The enzyme catalyses L-seryl-[protein] + ATP = O-phospho-L-seryl-[protein] + ADP + H(+). It carries out the reaction L-threonyl-[protein] + ATP = O-phospho-L-threonyl-[protein] + ADP + H(+). In terms of biological role, casein kinases are operationally defined by their preferential utilization of acidic proteins such as caseins as substrates. This chain is Casein kinase I homolog 2 (YCK2), found in Saccharomyces cerevisiae (strain ATCC 204508 / S288c) (Baker's yeast).